We begin with the raw amino-acid sequence, 513 residues long: Nuclear pore complex protein NUP58 (513 aa).

Disordered stretches follow at residues 28–62 (QTNSIFSQSQPQQTNSIFSQSQPQQTNSIFSQPQQ), 217–239 (SVGSQPSQGQGTNPAPASSGQQQ), and 356–513 (RETA…TTRR). The span at 30 to 50 (NSIFSQSQPQQTNSIFSQSQP) shows a compositional bias: polar residues. Composition is skewed to low complexity over residues 51–62 (QQTNSIFSQPQQ) and 217–227 (SVGSQPSQGQG). The span at 356–365 (RETAKQEAAA) shows a compositional bias: basic and acidic residues. Residues 377–386 (STTSTQPSTQ) are compositionally biased toward low complexity. The segment covering 393–427 (SSATPGGSNPPQTSVPTSNPSSGAGFSFLNTPASG) has biased composition (polar residues). Residues 428-446 (PSSSLFATPSSTAPTSSLF) are compositionally biased toward low complexity. Repeat copies occupy residues 446-447 (FG), 458-459 (FG), 466-467 (FG), 473-474 (FG), 486-487 (FG), and 497-498 (FG). Residues 446–498 (FGPSPTPTQTPLFGSSPASTFGSTQSLFGQTTPSLTMPSQFGGATPGSGASFG) form a 6 X 2 AA repeats of F-G region. A compositionally biased stretch (polar residues) spans 452–484 (PTQTPLFGSSPASTFGSTQSLFGQTTPSLTMPS). A compositionally biased stretch (basic residues) spans 504-513 (SRPKSRTTRR).

The protein belongs to the NUP58 family. As to quaternary structure, part of the nuclear pore complex (NPC). The NPC has an eight-fold symmetrical structure comprising a central transport channel and two rings, the cytoplasmic and nuclear rings, to which eight filaments are attached. The cytoplasmic filaments have loose ends, while the nuclear filaments are joined in a distal ring, forming a nuclear basket. NPCs are highly dynamic in configuration and composition, and can be devided in 3 subcomplexes, the NUP62 subcomplex, the NUP107-160 subcomplex and the NUP93 subcomplex, containing approximately 30 different nucleoporin proteins. Interacts with GAI, NUP62, SKP1A and SKP1B. Ubiquitous. Higherst expression in cauline leaves, lowest in roots.

The protein localises to the nucleus envelope. It localises to the nucleus. It is found in the nuclear pore complex. Involved in nucleocytoplasmic trafficking. May have regulatory roles in the gibberellin pathway, in auxin signaling and in light perception. The polypeptide is Nuclear pore complex protein NUP58 (Arabidopsis thaliana (Mouse-ear cress)).